Reading from the N-terminus, the 351-residue chain is Transmembrane protein 255A (351 aa).

Transmembrane regions (helical) follow at residues 30–50, 57–77, 89–109, and 226–246; these read IYVT…GLAA, VTVG…LGII, LVAS…CAIV, and TILN…LGGF. Positions 302 to 331 are disordered; it reads FPSSPPSGLSDEQEPQSPSPSPSYMWSSSA.

The protein belongs to the TMEM255 family.

The protein resides in the membrane. The polypeptide is Transmembrane protein 255A (Tmem255a) (Rattus norvegicus (Rat)).